The chain runs to 172 residues: Dual-action ribosomal maturation protein DarP (172 aa).

It belongs to the DarP family.

The protein resides in the cytoplasm. Its function is as follows. Member of a network of 50S ribosomal subunit biogenesis factors which assembles along the 30S-50S interface, preventing incorrect 23S rRNA structures from forming. Promotes peptidyl transferase center (PTC) maturation. This chain is Dual-action ribosomal maturation protein DarP, found in Ectopseudomonas mendocina (strain ymp) (Pseudomonas mendocina).